The chain runs to 421 residues: 4-hydroxy-3-methylbut-2-en-1-yl diphosphate synthase (flavodoxin) (421 aa).

4 residues coordinate [4Fe-4S] cluster: cysteine 298, cysteine 301, cysteine 344, and glutamate 351.

It belongs to the IspG family. [4Fe-4S] cluster is required as a cofactor.

The enzyme catalyses (2E)-4-hydroxy-3-methylbut-2-enyl diphosphate + oxidized [flavodoxin] + H2O + 2 H(+) = 2-C-methyl-D-erythritol 2,4-cyclic diphosphate + reduced [flavodoxin]. It participates in isoprenoid biosynthesis; isopentenyl diphosphate biosynthesis via DXP pathway; isopentenyl diphosphate from 1-deoxy-D-xylulose 5-phosphate: step 5/6. In terms of biological role, converts 2C-methyl-D-erythritol 2,4-cyclodiphosphate (ME-2,4cPP) into 1-hydroxy-2-methyl-2-(E)-butenyl 4-diphosphate. This is 4-hydroxy-3-methylbut-2-en-1-yl diphosphate synthase (flavodoxin) from Neisseria meningitidis serogroup C / serotype 2a (strain ATCC 700532 / DSM 15464 / FAM18).